Reading from the N-terminus, the 667-residue chain is MSSLSTKTDLLGDPDFIRLQSVEVDGSEVIPGETRPRRNTKFPKLTNSPDGKTFTLYDVYRINKDSDSNFLGIRELLADGKRGDYKWISYKQACIRANNIGSALVQLGLNKGDRIGIFSINRPEWVLSDMAAMNHSLVPVALYATLGANAIEYVVNHSEISVLLCEGKNVEKILSMPGTTIKTIVSYDPLPQATLDKFKDNENVKLYLLSDFEKLGEQNPAQHEVPSPEDLCTLLYTSGSTGNPKGVMLTHTNMVSEVAGANFSPAGVIPEDVHMSYLPLAHSFERAVVSLMCYVGGQIGFFSGLIPELFNDIQVLRPTFLCGAPRVWQRLHDKLWFTVNNDSWLKKFLFNWGLNSKQSALRLGSTTPIWDKLVFSKTKDRLGGRVKFILSGSAPLDPKLAEFLRACFCCPVVSGYGLSENVGGASVAYPEDNNVGHVGPPLSACEMKLIDVPEMNYFSTDKPCPRGEVCIRGFNVFKGYFKDPEKTKEDLKEDGWFHTGDIGRWNENGTLSIIDRKKNIFKLSQGEYVAAEYLESVFVRSPFASQVFVYGDSLNSFLVGVVVPDFEVVQKLFASKYPELDVSNHATLAKSKELYKEILSSFDACAAEAKLHGFEKLKHIYVEHEPFTEENNLLTPSFKPKRPQLKERYQTIIDTLYAEYKRDHPDV.

It belongs to the ATP-dependent AMP-binding enzyme family.

The protein localises to the endosome membrane. The enzyme catalyses a long-chain fatty acid + ATP + CoA = a long-chain fatty acyl-CoA + AMP + diphosphate. In terms of biological role, long chain fatty acid acyl-CoA synthetases catalyze the formation of a thiester bond between a free fatty acid and coenzyme A during fatty acid metabolic process. May mediate fatty acid retrieval from the lumen of endosomes into the cytoplasm. The sequence is that of Fatty acyl-CoA synthetase A (fcsA) from Dictyostelium discoideum (Social amoeba).